A 409-amino-acid polypeptide reads, in one-letter code: Elongation factor Tu, plastid (409 aa).

In terms of domain architecture, tr-type G spans 10–214 (KPHINIGTIG…SVDSYIPTPV (205 aa)). Positions 19–26 (GHVDHGKT) are G1. Position 19–26 (19–26 (GHVDHGKT)) interacts with GTP. A Mg(2+)-binding site is contributed by Thr-26. The segment at 60-64 (GITIN) is G2. Positions 81–84 (DCPG) are G3. GTP-binding positions include 81–85 (DCPGH) and 136–139 (NKED). Positions 136–139 (NKED) are G4. Positions 174-176 (SAL) are G5.

Belongs to the TRAFAC class translation factor GTPase superfamily. Classic translation factor GTPase family. EF-Tu/EF-1A subfamily.

The protein localises to the plastid. The enzyme catalyses GTP + H2O = GDP + phosphate + H(+). Functionally, GTP hydrolase that promotes the GTP-dependent binding of aminoacyl-tRNA to the A-site of ribosomes during protein biosynthesis. The sequence is that of Elongation factor Tu, plastid (tufA) from Helicosporidium sp. subsp. Simulium jonesii (Green alga).